Here is a 419-residue protein sequence, read N- to C-terminus: Histidine--tRNA ligase (419 aa).

Belongs to the class-II aminoacyl-tRNA synthetase family. In terms of assembly, homodimer.

It is found in the cytoplasm. It carries out the reaction tRNA(His) + L-histidine + ATP = L-histidyl-tRNA(His) + AMP + diphosphate + H(+). In Synechococcus sp. (strain JA-3-3Ab) (Cyanobacteria bacterium Yellowstone A-Prime), this protein is Histidine--tRNA ligase.